The chain runs to 247 residues: UPF0259 membrane protein BUAP5A_271 (247 aa).

6 helical membrane passes run 20–40 (IGAI…IDMF), 85–105 (IMES…LISV), 114–134 (IVSS…LNFL), 137–157 (FIIQ…SIIL), 188–208 (IIGP…MLLA), and 218–238 (LFLI…IYLF).

Belongs to the UPF0259 family.

The protein resides in the cell membrane. The protein is UPF0259 membrane protein BUAP5A_271 of Buchnera aphidicola subsp. Acyrthosiphon pisum (strain 5A).